Reading from the N-terminus, the 392-residue chain is MNIHEYQAKALLAQYGVGIPRGGVAETPAEATVIAQRLGGEIWAIKAQIHAGGRGKAGGVKLAKTPEEAGEIAKAMLGSRLITHQTSLEGKEVHKVYVEEGLGIEREYYLGIVLDRSLEMPVIMASRQGGVDIEEVAKNSPNEIIKVAVDPMIGFRPFHGRKLAFALGLAKEQVGLFVDFCTSLFRLYVQKDAEIVEINPLVFTSCKRFVALDAKISFDNNALYRHPEIVAMRDLSEEESSEIEAGEYNLNYVKLQGNVGCMVNGAGLAMATMDIIKHEGGEPANFLDVGGGAKPETVAKGFEIILKDPNVKAIFVNIFGGIVRCDRVANGILEAAKIVHVSVPVVVRLDGTNAKEAKEILEQANIPNIFAAPSLEGGAKKAVELACQGGAS.

Residues 9 to 244 (KALLAQYGVG…LSEEESSEIE (236 aa)) enclose the ATP-grasp domain. ATP is bound by residues K46, 53-55 (GRG), E99, L102, and E107. Positions 199 and 213 each coordinate Mg(2+). Residues N264 and 321–323 (GIV) each bind substrate.

Belongs to the succinate/malate CoA ligase beta subunit family. Heterotetramer of two alpha and two beta subunits. It depends on Mg(2+) as a cofactor.

The catalysed reaction is succinate + ATP + CoA = succinyl-CoA + ADP + phosphate. It catalyses the reaction GTP + succinate + CoA = succinyl-CoA + GDP + phosphate. It participates in carbohydrate metabolism; tricarboxylic acid cycle; succinate from succinyl-CoA (ligase route): step 1/1. Succinyl-CoA synthetase functions in the citric acid cycle (TCA), coupling the hydrolysis of succinyl-CoA to the synthesis of either ATP or GTP and thus represents the only step of substrate-level phosphorylation in the TCA. The beta subunit provides nucleotide specificity of the enzyme and binds the substrate succinate, while the binding sites for coenzyme A and phosphate are found in the alpha subunit. This chain is Succinate--CoA ligase [ADP-forming] subunit beta, found in Wolinella succinogenes (strain ATCC 29543 / DSM 1740 / CCUG 13145 / JCM 31913 / LMG 7466 / NCTC 11488 / FDC 602W) (Vibrio succinogenes).